The following is a 289-amino-acid chain: Ribosomal protein L11 methyltransferase (289 aa).

S-adenosyl-L-methionine contacts are provided by Thr142, Gly163, Asp185, and Asn226.

Belongs to the methyltransferase superfamily. PrmA family.

The protein resides in the cytoplasm. It catalyses the reaction L-lysyl-[protein] + 3 S-adenosyl-L-methionine = N(6),N(6),N(6)-trimethyl-L-lysyl-[protein] + 3 S-adenosyl-L-homocysteine + 3 H(+). Its function is as follows. Methylates ribosomal protein L11. The protein is Ribosomal protein L11 methyltransferase of Legionella pneumophila (strain Lens).